The primary structure comprises 710 residues: Polyribonucleotide nucleotidyltransferase (710 aa).

Mg(2+) contacts are provided by Asp-485 and Asp-491. Residues 552-611 (PKILTLTINPDKIRDVIGPSGKVINKIIEETGVKIDIEQDGTVYISSLDTAMNQKAKQII) enclose the KH domain. The region spanning 621–689 (GETYHGKVKR…NQGRVNLSRK (69 aa)) is the S1 motif domain.

Belongs to the polyribonucleotide nucleotidyltransferase family. Mg(2+) is required as a cofactor.

Its subcellular location is the cytoplasm. The enzyme catalyses RNA(n+1) + phosphate = RNA(n) + a ribonucleoside 5'-diphosphate. In terms of biological role, involved in mRNA degradation. Catalyzes the phosphorolysis of single-stranded polyribonucleotides processively in the 3'- to 5'-direction. The polypeptide is Polyribonucleotide nucleotidyltransferase (Shouchella clausii (strain KSM-K16) (Alkalihalobacillus clausii)).